Reading from the N-terminus, the 86-residue chain is Large ribosomal subunit protein eL43 (86 aa).

Residues C40, C43, C58, and C61 each coordinate Zn(2+). The segment at 40-61 (CPFCRSKAVIREAYGIYRCKKC) adopts a C4-type zinc-finger fold.

It belongs to the eukaryotic ribosomal protein eL43 family. Putative zinc-binding subfamily. In terms of assembly, part of the 50S ribosomal subunit. It depends on Zn(2+) as a cofactor.

In terms of biological role, binds to the 23S rRNA. This is Large ribosomal subunit protein eL43 from Nanoarchaeum equitans (strain Kin4-M).